Here is a 279-residue protein sequence, read N- to C-terminus: MIVIHSVAQMQQYARDKRGEIALVPTMGYLHEGHASLMVEARKRAKYVVASIFVNPTQFGVNEDLDSYPRDLEHDKEIAAKAGVDVIFAPIAAEMYPEGYQSYLNVEEISAHLCGASRPGHFRGVTTVVAKLFNIVAPKVALFGKKDFQQLAVLRRMVQDFNFDLEIVGMPIVREADGLAMSSRNTKLSPVEREKALCLSRSIAAAKAAFRGGERSVAALQKVAAAVIEGEKSPQIDYLEFRDQDSLLPLDKADERTLLALAVRVGSVRLIDNSILGED.

Position 27 to 34 (27 to 34 (MGYLHEGH)) interacts with ATP. Residue histidine 34 is the Proton donor of the active site. Position 58 (glutamine 58) interacts with (R)-pantoate. Glutamine 58 is a binding site for beta-alanine. Residue 144-147 (GKKD) participates in ATP binding. Glutamine 150 lines the (R)-pantoate pocket. ATP-binding positions include valine 173 and 181 to 184 (MSSR).

It belongs to the pantothenate synthetase family. Homodimer.

The protein localises to the cytoplasm. It carries out the reaction (R)-pantoate + beta-alanine + ATP = (R)-pantothenate + AMP + diphosphate + H(+). It functions in the pathway cofactor biosynthesis; (R)-pantothenate biosynthesis; (R)-pantothenate from (R)-pantoate and beta-alanine: step 1/1. Catalyzes the condensation of pantoate with beta-alanine in an ATP-dependent reaction via a pantoyl-adenylate intermediate. This is Pantothenate synthetase from Citrifermentans bemidjiense (strain ATCC BAA-1014 / DSM 16622 / JCM 12645 / Bem) (Geobacter bemidjiensis).